Here is a 241-residue protein sequence, read N- to C-terminus: MGKTMFKKTLLFFTALFFTALCAFSANANVIITGTRVIYPAGQKNVIVKLENNDDSAALVQAWIDNGNPNADPKYTKTPFVITPPVARVEAKSGQSLRITFTGGEPLPDDRESLFYFNLLDIPPKPDAEFLAKHGSFMQIAIRSRLKLFYRPAKLSLDPFDAMKKVVFKATPKGVLVDNQTPYYMNYIGLLHQNKPAKNVKMVAPFSQAVFEAKGVRSGDKLKWVLVNDYGADQEGDAIAQ.

The signal sequence occupies residues 1-27; that stretch reads MGKTMFKKTLLFFTALFFTALCAFSAN.

Belongs to the periplasmic pilus chaperone family.

The protein localises to the periplasm. Its function is as follows. Mediates assembly of pili by forming soluble multimeric complexes with pili subunits as an intermediate step in the assembly process. This protein is involved in type B pili (HifA) assembly. The protein is Chaperone protein HifB (hifB) of Haemophilus influenzae.